The primary structure comprises 117 residues: Large ribosomal subunit protein bL20c (117 aa).

This sequence belongs to the bacterial ribosomal protein bL20 family.

It localises to the plastid. The protein resides in the chloroplast. Functionally, binds directly to 23S ribosomal RNA and is necessary for the in vitro assembly process of the 50S ribosomal subunit. It is not involved in the protein synthesizing functions of that subunit. This Phalaenopsis aphrodite subsp. formosana (Moth orchid) protein is Large ribosomal subunit protein bL20c.